The primary structure comprises 236 residues: Small ribosomal subunit protein uS10m (236 aa).

A mitochondrion-targeting transit peptide spans 1–24 (MMRQSIRPLRAFSSEVSWIARRTQ). The tract at residues 29–49 (KPGDLVPNKPEPSKNEQEPRF) is disordered. Over residues 39-49 (EPSKNEQEPRF) the composition is skewed to basic and acidic residues.

Belongs to the universal ribosomal protein uS10 family. Part of the mitochondrial small ribosomal subunit.

It is found in the mitochondrion. Functionally, involved in mitochondrial genome encoded proteins translation. Involved in the binding of tRNA to the ribosomes. The chain is Small ribosomal subunit protein uS10m (RSM10) from Gibberella zeae (strain ATCC MYA-4620 / CBS 123657 / FGSC 9075 / NRRL 31084 / PH-1) (Wheat head blight fungus).